Reading from the N-terminus, the 225-residue chain is UPF0173 metal-dependent hydrolase Fjoh_2786 (225 aa).

The protein belongs to the UPF0173 family.

This is UPF0173 metal-dependent hydrolase Fjoh_2786 from Flavobacterium johnsoniae (strain ATCC 17061 / DSM 2064 / JCM 8514 / BCRC 14874 / CCUG 350202 / NBRC 14942 / NCIMB 11054 / UW101) (Cytophaga johnsonae).